A 462-amino-acid polypeptide reads, in one-letter code: A-type ATP synthase subunit B (462 aa).

It belongs to the ATPase alpha/beta chains family. Has multiple subunits with at least A(3), B(3), C, D, E, F, H, I and proteolipid K(x).

It localises to the cell membrane. Its function is as follows. Component of the A-type ATP synthase that produces ATP from ADP in the presence of a proton gradient across the membrane. The B chain is a regulatory subunit. In Methanococcus maripaludis (strain C6 / ATCC BAA-1332), this protein is A-type ATP synthase subunit B.